The chain runs to 104 residues: Phosphoribosyl-ATP pyrophosphatase (104 aa).

It belongs to the PRA-PH family.

It is found in the cytoplasm. The catalysed reaction is 1-(5-phospho-beta-D-ribosyl)-ATP + H2O = 1-(5-phospho-beta-D-ribosyl)-5'-AMP + diphosphate + H(+). Its pathway is amino-acid biosynthesis; L-histidine biosynthesis; L-histidine from 5-phospho-alpha-D-ribose 1-diphosphate: step 2/9. The sequence is that of Phosphoribosyl-ATP pyrophosphatase from Streptococcus thermophilus (strain ATCC BAA-491 / LMD-9).